A 130-amino-acid chain; its full sequence is Protein ApaG (130 aa).

The 125-residue stretch at Ser-3–Arg-127 folds into the ApaG domain.

The sequence is that of Protein ApaG from Methylocella silvestris (strain DSM 15510 / CIP 108128 / LMG 27833 / NCIMB 13906 / BL2).